Consider the following 234-residue polypeptide: MKFSPALQSATLILRYKRFLADVVTPAGEHLTLHCPNTGAMTGCATPGDTVWYSTSENLKRKYAHTWEITETQQGAFICVNTQRANQLVKEAIATHTIPELTGYGSIKGEVKYGEEGSRIDFMLQADDRPECYIEVKSVTLADRDNGYFPDAVTLRGQKHLRELMSVAATGKRAVLLFAVLHSAIERFSPARHIDPKYAQLLNEAQKQGVEILAYKAELSADNMTLKSTLPVVL.

This sequence belongs to the SfsA family.

This chain is Sugar fermentation stimulation protein homolog, found in Enterobacter sp. (strain 638).